A 122-amino-acid polypeptide reads, in one-letter code: Large ribosomal subunit protein uL14c (122 aa).

The protein belongs to the universal ribosomal protein uL14 family. Part of the 50S ribosomal subunit.

The protein resides in the plastid. The protein localises to the chloroplast. Binds to 23S rRNA. In Nandina domestica (Heavenly bamboo), this protein is Large ribosomal subunit protein uL14c.